The chain runs to 637 residues: Early transcription factor 70 kDa subunit (637 aa).

One can recognise a Helicase ATP-binding domain in the interval 32–185 (RTIIDENRSV…GHIIDLMSEE (154 aa)). 45-52 (HIMGSGKT) serves as a coordination point for ATP. The DEXH box motif lies at 135–138 (DEAH). Positions 327 to 507 (KFKYFINRIQ…VLPFDIKKLL (181 aa)) constitute a Helicase C-terminal domain.

It belongs to the helicase family. VETF subfamily. As to quaternary structure, heterodimer of a 70 kDa and a 82 kDa subunit. Part of the early transcription complex composed of ETF, RAP94/OPG109, and the DNA-directed RNA polymerase.

It localises to the virion. In terms of biological role, acts with RNA polymerase to initiate transcription from early gene promoters. Is recruited by the RPO-associated protein of 94 kDa RAP94/OPG109 to form the early transcription complex, which also contains the core RNA polymerase. ETF heterodimer binds to early gene promoters. The chain is Early transcription factor 70 kDa subunit (OPG118) from Homo sapiens (Human).